Reading from the N-terminus, the 680-residue chain is Coiled-coil domain-containing protein 138 (680 aa).

Residue Thr-63 is modified to Phosphothreonine. Ser-64 is subject to Phosphoserine. A coiled-coil region spans residues 260–339 (KEQHGTEIEH…YEFMTVQRLK (80 aa)). The interval 390-410 (EPEEPGVDGGKPPAKPSQRSD) is disordered. The residue at position 484 (Ser-484) is a Phosphoserine.

The polypeptide is Coiled-coil domain-containing protein 138 (Ccdc138) (Mus musculus (Mouse)).